A 453-amino-acid polypeptide reads, in one-letter code: MTTDTIVAQATAPGRGGVGIIRISGDKASDVAMAVLGHLPKTRYADYCDFKSASGQVIDQGIALFFKGPNSFTGEDVLELQGHGGQIVLDMLIKRVMEVGGIRIAKPGEFSEQAFMNDKLDLTQAEAIADLIDATSEQAAKSALQSLQGEFSKEVHELVDQVTNLRLYVEAAIDFPDEEVDFLSDGKIANALYKIIDKLDLVQASAKQGSIIREGMKVVIAGRPNAGKSSLLNALAGKESAIVTEIAGTTRDVLREHIHLDGMPLHIIDTAGLRDTNDTVEQIGIERAWNEINSADRVLFMVDGTTTAAVDPHTIWPDFVDRLPSNLGVTVIRNKADLTGEDLMMTEEQGYSVYRISAKTGLGVEELKQHLKSLMGYQSNLEGGFIARRRHLEALELAAGHLQLGKEQLEVYLAGELLAEELRMCQLALSEITGRFTSDDLLGKIFSSFCIGK.

Positions 22, 79, and 119 each coordinate (6S)-5-formyl-5,6,7,8-tetrahydrofolate. A TrmE-type G domain is found at 215 to 376 (GMKVVIAGRP…LKQHLKSLMG (162 aa)). Asparagine 225 lines the K(+) pocket. Residues 225–230 (NAGKSS), 244–250 (TEIAGTT), 269–272 (DTAG), and 334–337 (NKAD) each bind GTP. Serine 229 is a Mg(2+) binding site. Residues threonine 244, isoleucine 246, and threonine 249 each coordinate K(+). Threonine 250 contacts Mg(2+). Lysine 453 contributes to the (6S)-5-formyl-5,6,7,8-tetrahydrofolate binding site.

It belongs to the TRAFAC class TrmE-Era-EngA-EngB-Septin-like GTPase superfamily. TrmE GTPase family. Homodimer. Heterotetramer of two MnmE and two MnmG subunits. It depends on K(+) as a cofactor.

The protein resides in the cytoplasm. In terms of biological role, exhibits a very high intrinsic GTPase hydrolysis rate. Involved in the addition of a carboxymethylaminomethyl (cmnm) group at the wobble position (U34) of certain tRNAs, forming tRNA-cmnm(5)s(2)U34. The chain is tRNA modification GTPase MnmE from Shewanella baltica (strain OS195).